The sequence spans 635 residues: 1-deoxy-D-xylulose-5-phosphate synthase (635 aa).

Thiamine diphosphate is bound by residues histidine 74 and 115-117 (GHA). Aspartate 146 serves as a coordination point for Mg(2+). Residues 147-148 (GA), asparagine 175, tyrosine 285, and glutamate 367 each bind thiamine diphosphate. Residue asparagine 175 participates in Mg(2+) binding.

Belongs to the transketolase family. DXPS subfamily. In terms of assembly, homodimer. Requires Mg(2+) as cofactor. The cofactor is thiamine diphosphate.

The catalysed reaction is D-glyceraldehyde 3-phosphate + pyruvate + H(+) = 1-deoxy-D-xylulose 5-phosphate + CO2. It participates in metabolic intermediate biosynthesis; 1-deoxy-D-xylulose 5-phosphate biosynthesis; 1-deoxy-D-xylulose 5-phosphate from D-glyceraldehyde 3-phosphate and pyruvate: step 1/1. In terms of biological role, catalyzes the acyloin condensation reaction between C atoms 2 and 3 of pyruvate and glyceraldehyde 3-phosphate to yield 1-deoxy-D-xylulose-5-phosphate (DXP). The sequence is that of 1-deoxy-D-xylulose-5-phosphate synthase from Anaeromyxobacter sp. (strain Fw109-5).